A 398-amino-acid polypeptide reads, in one-letter code: Elongation factor Tu (398 aa).

The region spanning 10–207 (KPHVNIGTIG…TVDEYIPEPE (198 aa)) is the tr-type G domain. Residues 19–26 (GHVDHGKT) are G1. 19–26 (GHVDHGKT) is a binding site for GTP. T26 contributes to the Mg(2+) binding site. Positions 63–67 (GITIN) are G2. A G3 region spans residues 84–87 (DAPG). Residues 84 to 88 (DAPGH) and 139 to 142 (NKVD) contribute to the GTP site. The tract at residues 139-142 (NKVD) is G4. A G5 region spans residues 177–179 (SAL).

It belongs to the TRAFAC class translation factor GTPase superfamily. Classic translation factor GTPase family. EF-Tu/EF-1A subfamily. As to quaternary structure, monomer.

It is found in the cytoplasm. The catalysed reaction is GTP + H2O = GDP + phosphate + H(+). Its function is as follows. GTP hydrolase that promotes the GTP-dependent binding of aminoacyl-tRNA to the A-site of ribosomes during protein biosynthesis. This is Elongation factor Tu from Streptococcus pneumoniae serotype 4 (strain ATCC BAA-334 / TIGR4).